The primary structure comprises 146 residues: Large ribosomal subunit protein uL15 (146 aa).

Residues 1–13 show a composition bias toward basic and acidic residues; the sequence is MKLHELHSAEGSR. Positions 1 to 55 are disordered; sequence MKLHELHSAEGSRRNRKRVGRGTSSGYGKTSGRGQKGQLARQGGHTRLGFEGGQM. Gly residues predominate over residues 23–35; that stretch reads TSSGYGKTSGRGQ.

This sequence belongs to the universal ribosomal protein uL15 family. In terms of assembly, part of the 50S ribosomal subunit.

In terms of biological role, binds to the 23S rRNA. The polypeptide is Large ribosomal subunit protein uL15 (Lactobacillus helveticus (strain DPC 4571)).